The following is a 157-amino-acid chain: CASP-like protein 1 (157 aa).

At 1 to 13 (MKTEARDGGSEWR) the chain is on the cytoplasmic side. The chain crosses the membrane as a helical span at residues 14-34 (WVAIFELFLRLAAIVSTSVAV). Over 35-40 (YAAMGK) the chain is Extracellular. Residues 41-61 (IFVVAVNGVACFYLLMSLPVS) traverse the membrane as a helical segment. Residues 62–82 (IFNIMRPHAYPANRVFLNIMD) lie on the Cytoplasmic side of the membrane. A helical membrane pass occupies residues 83 to 103 (MVMVALVTAGALAAGIVYLVE). Topologically, residues 104–121 (KAGNARASWVSVWSQFDS) are extracellular. Residues 122–142 (SSCFAVLALILHVLLSGVILY) traverse the membrane as a helical segment. Topologically, residues 143–157 (KQALNIKFKKLDSVD) are cytoplasmic.

Belongs to the Casparian strip membrane proteins (CASP) family. As to quaternary structure, homodimer and heterodimers.

It localises to the cell membrane. The polypeptide is CASP-like protein 1 (Picea sitchensis (Sitka spruce)).